The chain runs to 305 residues: UDP-3-O-acyl-N-acetylglucosamine deacetylase (305 aa).

The Zn(2+) site is built by His79, His238, and Asp242. His265 serves as the catalytic Proton donor.

It belongs to the LpxC family. The cofactor is Zn(2+).

It catalyses the reaction a UDP-3-O-[(3R)-3-hydroxyacyl]-N-acetyl-alpha-D-glucosamine + H2O = a UDP-3-O-[(3R)-3-hydroxyacyl]-alpha-D-glucosamine + acetate. It participates in glycolipid biosynthesis; lipid IV(A) biosynthesis; lipid IV(A) from (3R)-3-hydroxytetradecanoyl-[acyl-carrier-protein] and UDP-N-acetyl-alpha-D-glucosamine: step 2/6. Its function is as follows. Catalyzes the hydrolysis of UDP-3-O-myristoyl-N-acetylglucosamine to form UDP-3-O-myristoylglucosamine and acetate, the committed step in lipid A biosynthesis. The chain is UDP-3-O-acyl-N-acetylglucosamine deacetylase from Citrobacter koseri (strain ATCC BAA-895 / CDC 4225-83 / SGSC4696).